Consider the following 282-residue polypeptide: 2-dehydro-3-deoxyphosphooctonate aldolase (282 aa).

This sequence belongs to the KdsA family.

The protein localises to the cytoplasm. The catalysed reaction is D-arabinose 5-phosphate + phosphoenolpyruvate + H2O = 3-deoxy-alpha-D-manno-2-octulosonate-8-phosphate + phosphate. The protein operates within carbohydrate biosynthesis; 3-deoxy-D-manno-octulosonate biosynthesis; 3-deoxy-D-manno-octulosonate from D-ribulose 5-phosphate: step 2/3. It functions in the pathway bacterial outer membrane biogenesis; lipopolysaccharide biosynthesis. The chain is 2-dehydro-3-deoxyphosphooctonate aldolase from Shewanella piezotolerans (strain WP3 / JCM 13877).